Here is a 320-residue protein sequence, read N- to C-terminus: Methyltransferase gedG (320 aa).

Residues 61-154 (DAGAGNGVYS…QLRPGGTFAC (94 aa)) form a methyltransferase domain region. The segment at 231 to 252 (GLLPPERRGEVTEPDHEGPHDQ) is disordered. Residues 235 to 252 (PERRGEVTEPDHEGPHDQ) are compositionally biased toward basic and acidic residues.

Belongs to the methyltransferase superfamily.

Its pathway is secondary metabolite biosynthesis. Its function is as follows. Methyltransferase; part of the gene cluster that mediates the biosynthesis of geodin, an intermediate in the biosynthesis of other natural products. The pathway begins with the synthesis of atrochrysone thioester by the polyketide synthase (PKS) gedC. The atrochrysone carboxyl ACP thioesterase gedB then breaks the thioester bond and releases the atrochrysone carboxylic acid from gedC. The atrochrysone carboxylic acid is then converted to atrochrysone which is further transformed into emodinanthrone. The next step is performed by the emodinanthrone oxygenase gedH that catalyzes the oxidation of emodinanthrone to emodin. Emodin O-methyltransferase encoded probably by gedA then catalyzes methylation of the 8-hydroxy group of emodin to form questin. Ring cleavage of questin by questin oxidase gedK leads to desmethylsulochrin via several intermediates including questin epoxide. Another methylation step probably catalyzed by methyltransferase gedG leads to the formation of sulochrin which is further converted to dihydrogeodin by the sulochrin halogenase gedL. Finally, the dihydrogeodin oxidase gedJ catalyzes the stereospecific phenol oxidative coupling reaction converting dihydrogeodin to geodin. This is Methyltransferase gedG from Aspergillus terreus (strain NIH 2624 / FGSC A1156).